The chain runs to 448 residues: UDP-N-acetylmuramoylalanine--D-glutamate ligase (448 aa).

116–122 (GSNAKST) contributes to the ATP binding site.

This sequence belongs to the MurCDEF family.

Its subcellular location is the cytoplasm. The enzyme catalyses UDP-N-acetyl-alpha-D-muramoyl-L-alanine + D-glutamate + ATP = UDP-N-acetyl-alpha-D-muramoyl-L-alanyl-D-glutamate + ADP + phosphate + H(+). It participates in cell wall biogenesis; peptidoglycan biosynthesis. In terms of biological role, cell wall formation. Catalyzes the addition of glutamate to the nucleotide precursor UDP-N-acetylmuramoyl-L-alanine (UMA). The sequence is that of UDP-N-acetylmuramoylalanine--D-glutamate ligase from Pseudomonas savastanoi pv. phaseolicola (strain 1448A / Race 6) (Pseudomonas syringae pv. phaseolicola (strain 1448A / Race 6)).